The chain runs to 369 residues: Nudix hydrolase 8 (369 aa).

The Nudix hydrolase domain occupies 188 to 318 (SHQVGVGGFV…GDKMFKRVIE (131 aa)). The Nudix box motif lies at 225–246 (GFINESEEIFSGAVREVKEETG). Positions 240 and 244 each coordinate Mg(2+).

It belongs to the Nudix hydrolase family. Requires Mg(2+) as cofactor. Mn(2+) serves as cofactor. In terms of tissue distribution, expressed in roots, stems and, at lower level, leaves.

Probably mediates the hydrolysis of some nucleoside diphosphate derivatives. May be involved in plant immunity and act as a positive regulator of defense response through salicylic acid (SA) signaling. In Arabidopsis thaliana (Mouse-ear cress), this protein is Nudix hydrolase 8 (NUDT8).